A 311-amino-acid polypeptide reads, in one-letter code: Porphobilinogen deaminase (311 aa).

Cys242 carries the S-(dipyrrolylmethanemethyl)cysteine modification.

The protein belongs to the HMBS family. Monomer. The cofactor is dipyrromethane.

It catalyses the reaction 4 porphobilinogen + H2O = hydroxymethylbilane + 4 NH4(+). It functions in the pathway porphyrin-containing compound metabolism; protoporphyrin-IX biosynthesis; coproporphyrinogen-III from 5-aminolevulinate: step 2/4. Functionally, tetrapolymerization of the monopyrrole PBG into the hydroxymethylbilane pre-uroporphyrinogen in several discrete steps. This chain is Porphobilinogen deaminase (hemC), found in Neisseria meningitidis serogroup B (strain ATCC BAA-335 / MC58).